We begin with the raw amino-acid sequence, 190 residues long: Protein GrpE (190 aa).

Over residues 1–18 (MTETPNTSSEEIQTSEPS) the composition is skewed to polar residues. The disordered stretch occupies residues 1–21 (MTETPNTSSEEIQTSEPSPDN).

It belongs to the GrpE family. Homodimer.

The protein localises to the cytoplasm. Participates actively in the response to hyperosmotic and heat shock by preventing the aggregation of stress-denatured proteins, in association with DnaK and GrpE. It is the nucleotide exchange factor for DnaK and may function as a thermosensor. Unfolded proteins bind initially to DnaJ; upon interaction with the DnaJ-bound protein, DnaK hydrolyzes its bound ATP, resulting in the formation of a stable complex. GrpE releases ADP from DnaK; ATP binding to DnaK triggers the release of the substrate protein, thus completing the reaction cycle. Several rounds of ATP-dependent interactions between DnaJ, DnaK and GrpE are required for fully efficient folding. This is Protein GrpE from Chlamydia trachomatis serovar A (strain ATCC VR-571B / DSM 19440 / HAR-13).